A 478-amino-acid polypeptide reads, in one-letter code: Protein nucleotidyltransferase YdiU (478 aa).

Residues Gly-84, Gly-86, Arg-87, Lys-107, Asp-119, Gly-120, Arg-170, and Arg-177 each contribute to the ATP site. The Proton acceptor role is filled by Asp-246. Mg(2+)-binding residues include Asn-247 and Asp-256. An ATP-binding site is contributed by Asp-256.

This sequence belongs to the SELO family. Mg(2+) is required as a cofactor. Requires Mn(2+) as cofactor.

The enzyme catalyses L-seryl-[protein] + ATP = 3-O-(5'-adenylyl)-L-seryl-[protein] + diphosphate. It carries out the reaction L-threonyl-[protein] + ATP = 3-O-(5'-adenylyl)-L-threonyl-[protein] + diphosphate. The catalysed reaction is L-tyrosyl-[protein] + ATP = O-(5'-adenylyl)-L-tyrosyl-[protein] + diphosphate. It catalyses the reaction L-histidyl-[protein] + UTP = N(tele)-(5'-uridylyl)-L-histidyl-[protein] + diphosphate. The enzyme catalyses L-seryl-[protein] + UTP = O-(5'-uridylyl)-L-seryl-[protein] + diphosphate. It carries out the reaction L-tyrosyl-[protein] + UTP = O-(5'-uridylyl)-L-tyrosyl-[protein] + diphosphate. Functionally, nucleotidyltransferase involved in the post-translational modification of proteins. It can catalyze the addition of adenosine monophosphate (AMP) or uridine monophosphate (UMP) to a protein, resulting in modifications known as AMPylation and UMPylation. This chain is Protein nucleotidyltransferase YdiU, found in Escherichia coli O127:H6 (strain E2348/69 / EPEC).